Here is a 425-residue protein sequence, read N- to C-terminus: Kynurenine/alpha-aminoadipate aminotransferase, mitochondrial (425 aa).

The N-terminal 29 residues, 1–29 (MNYSRFLTATSLARKPSPIRTTADILSKA), are a transit peptide targeting the mitochondrion. Arg-20 lines the substrate pocket. Ser-40 is modified (phosphoserine). Lys-69 is modified (N6-acetyllysine). Tyr-74 serves as a coordination point for substrate. Residue Lys-172 is modified to N6-succinyllysine. The residue at position 179 (Lys-179) is an N6-acetyllysine. Position 202 (Asn-202) interacts with substrate. Position 263 is an N6-(pyridoxal phosphate)lysine; alternate (Lys-263). 2 positions are modified to N6-acetyllysine; alternate: Lys-263 and Lys-339. N6-succinyllysine; alternate occurs at positions 263 and 339. Lys-351 is modified (N6-acetyllysine). Position 367 is an N6-acetyllysine; alternate (Lys-367). Residue Lys-367 is modified to N6-succinyllysine; alternate. Substrate is bound at residue Arg-399. Residue Lys-422 is modified to N6-acetyllysine.

Belongs to the class-I pyridoxal-phosphate-dependent aminotransferase family. As to quaternary structure, homodimer. Pyridoxal 5'-phosphate serves as cofactor. In terms of tissue distribution, expressed mainly in kidney and to a lesser amount in liver and brain.

It is found in the mitochondrion. It carries out the reaction L-kynurenine + 2-oxoglutarate = kynurenate + L-glutamate + H2O. The enzyme catalyses L-2-aminoadipate + 2-oxoglutarate = 2-oxoadipate + L-glutamate. The catalysed reaction is glycine + 2-oxoglutarate = glyoxylate + L-glutamate. It catalyses the reaction L-kynurenine + glyoxylate = kynurenate + glycine + H2O. It carries out the reaction 3-hydroxy-L-kynurenine + glyoxylate = xanthurenate + glycine + H2O. The enzyme catalyses 2-oxohexanoate + L-kynurenine = L-2-aminohexanoate + kynurenate + H2O. The catalysed reaction is 3-phenylpyruvate + L-kynurenine = kynurenate + L-phenylalanine + H2O. It catalyses the reaction 4-methylsulfanyl-2-oxobutanoate + L-kynurenine = kynurenate + L-methionine + H2O. It carries out the reaction 2-oxo-3-sulfanylpropanoate + L-kynurenine = kynurenate + L-cysteine + H2O. The enzyme catalyses indole-3-pyruvate + L-kynurenine = kynurenate + L-tryptophan + H2O. The catalysed reaction is 2-oxopentanoate + L-kynurenine = L-2-aminopentanoate + kynurenate + H2O. It catalyses the reaction 4-methyl-2-oxopentanoate + L-kynurenine = kynurenate + L-leucine + H2O. It carries out the reaction glyoxylate + L-methionine = 4-methylsulfanyl-2-oxobutanoate + glycine. The enzyme catalyses L-2-aminoadipate + glyoxylate = 2-oxoadipate + glycine. The catalysed reaction is L-tyrosine + glyoxylate = 3-(4-hydroxyphenyl)pyruvate + glycine. It catalyses the reaction glyoxylate + L-phenylalanine = 3-phenylpyruvate + glycine. It carries out the reaction L-tryptophan + glyoxylate = indole-3-pyruvate + glycine. The enzyme catalyses L-leucine + glyoxylate = 4-methyl-2-oxopentanoate + glycine. The catalysed reaction is 2-oxobutanoate + L-kynurenine = (2S)-2-aminobutanoate + kynurenate + H2O. It catalyses the reaction 2-oxoadipate + L-kynurenine = L-2-aminoadipate + kynurenate + H2O. It participates in amino-acid degradation; L-lysine degradation via saccharopine pathway; glutaryl-CoA from L-lysine: step 4/6. Transaminase with broad substrate specificity. Has transaminase activity towards aminoadipate, kynurenine, methionine and glutamate. Shows activity also towards tryptophan, aspartate and hydroxykynurenine. Accepts a variety of oxo-acids as amino-group acceptors, with a preference for 2-oxoglutarate, 2-oxocaproic acid, phenylpyruvate and alpha-oxo-gamma-methiol butyric acid. Can also use glyoxylate as amino-group acceptor (in vitro). The protein is Kynurenine/alpha-aminoadipate aminotransferase, mitochondrial of Mus musculus (Mouse).